The primary structure comprises 351 residues: S-adenosylmethionine:tRNA ribosyltransferase-isomerase (351 aa).

Belongs to the QueA family. As to quaternary structure, monomer.

The protein resides in the cytoplasm. It carries out the reaction 7-aminomethyl-7-carbaguanosine(34) in tRNA + S-adenosyl-L-methionine = epoxyqueuosine(34) in tRNA + adenine + L-methionine + 2 H(+). Its pathway is tRNA modification; tRNA-queuosine biosynthesis. Transfers and isomerizes the ribose moiety from AdoMet to the 7-aminomethyl group of 7-deazaguanine (preQ1-tRNA) to give epoxyqueuosine (oQ-tRNA). The protein is S-adenosylmethionine:tRNA ribosyltransferase-isomerase of Hyphomonas neptunium (strain ATCC 15444).